The primary structure comprises 377 residues: Presenilin-associated rhomboid-like protein, mitochondrial (377 aa).

Residues 1 to 50 constitute a mitochondrion transit peptide; that stretch reads MALYSWVQRGWRCGQTWAPLLGGGYRELSATQARQLLGRRFNLLLQQKCG. Topologically, residues 51 to 95 are mitochondrial matrix; that stretch reads FRKAPRKVEPRRSDTGSSGEAYKRSALIPPLEETVFYPSPYPVRT. Residues Ser-63 and Ser-68 each carry the phosphoserine modification. A helical membrane pass occupies residues 96 to 116; that stretch reads LLKPFFFTVGFTGCAFGSAAI. Residues 117–165 lie on the Mitochondrial intermembrane side of the membrane; that stretch reads WQYESLKSRVQSYFDGIKADWLDSIRPQKEGNLRKEINKWWNSLSDGQR. A helical transmembrane segment spans residues 166 to 186; that stretch reads TVTGIIAANALVFCLWRVPSL. The Mitochondrial matrix segment spans residues 187–214; sequence HRTMIRYFTSNPASKVLCSPMLLSTFSH. A helical transmembrane segment spans residues 215–235; that stretch reads FSLFHMAANMYVLWSFSTSIV. Residues 236 to 242 are Mitochondrial intermembrane-facing; the sequence is NILGQEQ. The helical transmembrane segment at 243-263 threads the bilayer; that stretch reads FVAVYLSAGVISNFVSYVCKV. Residues 264-268 are Mitochondrial matrix-facing; it reads ATGRY. Residues 269 to 289 form a helical membrane-spanning segment; that stretch reads GPSLGASGAIMTVLAAVCTKI. Catalysis depends on Ser-275, which acts as the Nucleophile. Over 290-293 the chain is Mitochondrial intermembrane; sequence PEGR. A helical membrane pass occupies residues 294 to 314; it reads LAIIFLPVFTFTAGNALKAII. Residues 315-331 are Mitochondrial matrix-facing; it reads AMDTAGMILGWKFFDHA. A helical membrane pass occupies residues 332–352; it reads AHLGGALFGIWYITYGHELIW. Residue His-333 is part of the active site. The Mitochondrial intermembrane portion of the chain corresponds to 353-377; the sequence is KNREPLVKIWHEIRTNGPKKGGGSK.

Belongs to the peptidase S54 family. Interacts with PSEN1 and PSEN2. Binds OPA1. In terms of processing, P-beta is proteolytically processed (beta-cleavage) in a PARL-dependent manner.

The protein localises to the mitochondrion inner membrane. The protein resides in the nucleus. It catalyses the reaction Cleaves type-1 transmembrane domains using a catalytic dyad composed of serine and histidine that are contributed by different transmembrane domains.. Functionally, required for the control of apoptosis during postnatal growth. Essential for proteolytic processing of an antiapoptotic form of OPA1 which prevents the release of mitochondrial cytochrome c in response to intrinsic apoptotic signals. Required for the maturation of PINK1 into its 52kDa mature form after its cleavage by mitochondrial-processing peptidase (MPP). Promotes cleavage of serine/threonine-protein phosphatase PGAM5 in damaged mitochondria in response to loss of mitochondrial membrane potential. Mediates differential cleavage of PINK1 and PGAM5 depending on the health status of mitochondria, disassociating from PINK1 and associating with PGAM5 in response to mitochondrial membrane potential loss. Required for processing of CLPB into a form with higher protein disaggregase activity by removing an autoinhibitory N-terminal peptide. Promotes processing of DIABLO/SMAC in the mitochondrion which is required for DIABLO apoptotic activity. Also required for cleavage of STARD7 and TTC19. Promotes changes in mitochondria morphology regulated by phosphorylation of P-beta domain. The protein is Presenilin-associated rhomboid-like protein, mitochondrial of Rattus norvegicus (Rat).